Here is a 437-residue protein sequence, read N- to C-terminus: tRNA(Ile2) 2-agmatinylcytidine synthetase TiaS (437 aa).

This sequence belongs to the TiaS family.

The protein resides in the cytoplasm. The catalysed reaction is cytidine(34) in tRNA(Ile2) + agmatine + ATP + H2O = 2-agmatinylcytidine(34) in tRNA(Ile2) + AMP + 2 phosphate + 2 H(+). In terms of biological role, ATP-dependent agmatine transferase that catalyzes the formation of 2-agmatinylcytidine (agm2C) at the wobble position (C34) of tRNA(Ile2), converting the codon specificity from AUG to AUA. The polypeptide is tRNA(Ile2) 2-agmatinylcytidine synthetase TiaS (Acidilobus saccharovorans (strain DSM 16705 / JCM 18335 / VKM B-2471 / 345-15)).